The chain runs to 239 residues: Ribonuclease PH (239 aa).

Phosphate contacts are provided by residues R87 and 125–127 (GTR).

This sequence belongs to the RNase PH family. As to quaternary structure, homohexameric ring arranged as a trimer of dimers.

It carries out the reaction tRNA(n+1) + phosphate = tRNA(n) + a ribonucleoside 5'-diphosphate. In terms of biological role, phosphorolytic 3'-5' exoribonuclease that plays an important role in tRNA 3'-end maturation. Removes nucleotide residues following the 3'-CCA terminus of tRNAs; can also add nucleotides to the ends of RNA molecules by using nucleoside diphosphates as substrates, but this may not be physiologically important. Probably plays a role in initiation of 16S rRNA degradation (leading to ribosome degradation) during starvation. The polypeptide is Ribonuclease PH (Pseudomonas paraeruginosa (strain DSM 24068 / PA7) (Pseudomonas aeruginosa (strain PA7))).